The primary structure comprises 407 residues: Protein COS9 (407 aa).

3 consecutive transmembrane segments (helical) span residues 75–95 (TWLL…IKSI), 98–118 (IFPF…LPNI), and 261–281 (IFNL…YVSW).

This sequence belongs to the DUP/COS family.

It localises to the membrane. The chain is Protein COS9 (COS9) from Saccharomyces cerevisiae (strain ATCC 204508 / S288c) (Baker's yeast).